The sequence spans 389 residues: MVTVEEFRKAQRAEGPATIMAIGTATPANCVLQSEYPDYYFRITNSEHKTELKEKFKRMCDKSMIRKRYMHLTEEILKENPNLCAYEAPSLDARQDMVVVEVPKLGKEAATKAIKEWGQPKSKITHLVFCTTSGVDMPGADYQLTKLLGLRPSVKRLMMYQQGCFAGGTVLRLAKDLAENNKGARVLVVCSEITAVTFRGPNDTHLDSLVGQALFGDGSAALIVGSDPIPEVEKPIFELVSAAQTILPDSDGAIDGHLREVGLTFHLLKDVPGLISKNIEKSLNEAFKPLGISDWNSLFWIAHPGGPAILDQVESKLALKTEKLRATRHVLSEYGNMSSACVLFILDEMRRKCVEDGLNTTGEGLEWGVLFGFGPGLTVETVVLHSVAI.

Cys164 is a catalytic residue.

The protein belongs to the thiolase-like superfamily. Chalcone/stilbene synthases family. As to expression, expressed in glandular trichomes. Detected at low levels in female flowers, stems, seeds, leaves and roots.

The protein localises to the cytoplasm. It carries out the reaction (E)-4-coumaroyl-CoA + 3 malonyl-CoA + 3 H(+) = 2',4,4',6'-tetrahydroxychalcone + 3 CO2 + 4 CoA. In terms of biological role, chalcone synthase that can also use isovaleryl-CoA, isobutyryl-CoA or hexanoyl-CoA as substrates, but that is unable to produce olivetol or olivetolic acid. This is Naringenin-chalcone synthase (CHS) from Cannabis sativa (Hemp).